We begin with the raw amino-acid sequence, 360 residues long: DNA polymerase IV (360 aa).

In terms of domain architecture, UmuC spans 6–187 (IIHVDMDAFY…LKIGDLHGVG (182 aa)). Aspartate 10 and aspartate 105 together coordinate Mg(2+). Glutamate 106 is a catalytic residue.

The protein belongs to the DNA polymerase type-Y family. As to quaternary structure, monomer. Requires Mg(2+) as cofactor.

It is found in the cytoplasm. The enzyme catalyses DNA(n) + a 2'-deoxyribonucleoside 5'-triphosphate = DNA(n+1) + diphosphate. Its function is as follows. Poorly processive, error-prone DNA polymerase involved in untargeted mutagenesis. Copies undamaged DNA at stalled replication forks, which arise in vivo from mismatched or misaligned primer ends. These misaligned primers can be extended by PolIV. Exhibits no 3'-5' exonuclease (proofreading) activity. May be involved in translesional synthesis, in conjunction with the beta clamp from PolIII. This Exiguobacterium sibiricum (strain DSM 17290 / CCUG 55495 / CIP 109462 / JCM 13490 / 255-15) protein is DNA polymerase IV.